Here is a 129-residue protein sequence, read N- to C-terminus: Aspartate 1-decarboxylase (129 aa).

The active-site Schiff-base intermediate with substrate; via pyruvic acid is serine 25. Pyruvic acid (Ser) is present on serine 25. Threonine 57 contacts substrate. Residue tyrosine 58 is the Proton donor of the active site. 73 to 75 is a substrate binding site; sequence GAA.

This sequence belongs to the PanD family. In terms of assembly, heterooctamer of four alpha and four beta subunits. The cofactor is pyruvate. In terms of processing, is synthesized initially as an inactive proenzyme, which is activated by self-cleavage at a specific serine bond to produce a beta-subunit with a hydroxyl group at its C-terminus and an alpha-subunit with a pyruvoyl group at its N-terminus.

It localises to the cytoplasm. It carries out the reaction L-aspartate + H(+) = beta-alanine + CO2. Its pathway is cofactor biosynthesis; (R)-pantothenate biosynthesis; beta-alanine from L-aspartate: step 1/1. In terms of biological role, catalyzes the pyruvoyl-dependent decarboxylation of aspartate to produce beta-alanine. This is Aspartate 1-decarboxylase from Prosthecochloris aestuarii (strain DSM 271 / SK 413).